A 1512-amino-acid chain; its full sequence is Mitogen-activated protein kinase kinase kinase 1 (1512 aa).

Positions 1–13 are enriched in low complexity; the sequence is MAAAAGNRASSSG. 3 disordered regions span residues 1–37, 67–181, and 213–304; these read MAAAAGNRASSSGFPGARATSPEAGGGGGALKASSAP, SVEL…DRPE, and VKPI…PEET. At Ala-2 the chain carries N-acetylalanine. Phosphoserine occurs at positions 21 and 35. Composition is skewed to low complexity over residues 81–99, 129–142, and 150–160; these read AASPPASSTSPSPEPADAA, AAPDSGASSPAAAE, and AAEPSPAAAPA. A phosphoserine mark is found at Ser-137 and Ser-154. Over residues 162 to 181 the composition is skewed to basic and acidic residues; the sequence is REMENKETLKGLHKMDDRPE. A compositionally biased stretch (low complexity) spans 250 to 260; the sequence is SPSPGNSPSGR. Phosphoserine is present on Ser-275. Thr-285 is modified (phosphothreonine). Phosphoserine occurs at positions 292, 297, and 300. The segment at 338–366 adopts an SWIM-type zinc-finger fold; sequence YRVFIGPQNCSCARGTFCIHLLFVMLRVF. Positions 416-433 are enriched in low complexity; the sequence is SNSHTLSSSSTSTSSSEN. Residues 416 to 436 form a disordered region; it reads SNSHTLSSSSTSTSSSENSIK. Residues 443 to 492 form an RING-type zinc finger; it reads CPICLLGMLDEESLTVCEDGCRNKLHHHCMSIWAEECRRNREPLICPLCR. A phosphoserine mark is found at Ser-507 and Ser-531. Disordered regions lie at residues 511–532 and 602–624; these read SPSSLRAAQQQTVQQQPLAGSR and STGNSGGSSGSSPSGGATSGSSQ. Over residues 611-624 the composition is skewed to low complexity; sequence GSSPSGGATSGSSQ. Ser-923 is modified (phosphoserine). The segment at 933–972 is disordered; it reads SISVGPSSSTTTTTTTTEQPKPMVQTKGRPHSQCLNSSPL. Positions 939–949 are enriched in low complexity; that stretch reads SSSTTTTTTTT. Ser-1018 carries the phosphoserine modification. Basic and acidic residues predominate over residues 1032–1041; the sequence is NCPENKDSDK. The disordered stretch occupies residues 1032–1087; that stretch reads NCPENKDSDKLSPVFTQSRPLPSSNIHRPKPSRPTPGNTSKQGDPSKNSMTLDLNS. Ser-1043 bears the Phosphoserine mark. Polar residues-rich tracts occupy residues 1045–1057 and 1066–1087; these read VFTQSRPLPSSNI and TPGNTSKQGDPSKNSMTLDLNS. Positions 1243–1508 constitute a Protein kinase domain; that stretch reads WLKGQQIGLG…SRELLKHPVF (266 aa). ATP contacts are provided by residues 1249-1257 and Lys-1272; that span reads IGLGAFSSC. Asp-1369 functions as the Proton acceptor in the catalytic mechanism. A phosphothreonine; by autocatalysis mark is found at Thr-1400 and Thr-1412.

Belongs to the protein kinase superfamily. STE Ser/Thr protein kinase family. MAP kinase kinase kinase subfamily. As to quaternary structure, binds both upstream activators and downstream substrates in multimolecular complexes through its N-terminus. Oligomerizes after binding MAP2K4 or TRAF2. Interacts with AXIN1. Interacts (via the kinase catalytic domain) with STK38. Interacts with GRIPAP1. The cofactor is Mg(2+). In terms of processing, autophosphorylated.

The catalysed reaction is L-seryl-[protein] + ATP = O-phospho-L-seryl-[protein] + ADP + H(+). The enzyme catalyses L-threonyl-[protein] + ATP = O-phospho-L-threonyl-[protein] + ADP + H(+). It catalyses the reaction S-ubiquitinyl-[E2 ubiquitin-conjugating enzyme]-L-cysteine + [acceptor protein]-L-lysine = [E2 ubiquitin-conjugating enzyme]-L-cysteine + N(6)-ubiquitinyl-[acceptor protein]-L-lysine.. Activated by autophosphorylation on Thr-1400 and Thr-1412 following oligomerization. Component of a protein kinase signal transduction cascade. Activates the ERK and JNK kinase pathways by phosphorylation of MAP2K1 and MAP2K4. May phosphorylate the MAPK8/JNK1 kinase. Activates CHUK and IKBKB, the central protein kinases of the NF-kappa-B pathway. In Homo sapiens (Human), this protein is Mitogen-activated protein kinase kinase kinase 1 (MAP3K1).